Here is a 557-residue protein sequence, read N- to C-terminus: Dihydroxy-acid dehydratase (557 aa).

Cys-49 serves as a coordination point for [2Fe-2S] cluster. Residue Asp-81 participates in Mg(2+) binding. Position 122 (Cys-122) interacts with [2Fe-2S] cluster. 2 residues coordinate Mg(2+): Asp-123 and Lys-124. Lys-124 is modified (N6-carboxylysine). Residue Cys-194 participates in [2Fe-2S] cluster binding. Residue Glu-446 participates in Mg(2+) binding. Residue Ser-472 is the Proton acceptor of the active site.

It belongs to the IlvD/Edd family. As to quaternary structure, homodimer. [2Fe-2S] cluster serves as cofactor. It depends on Mg(2+) as a cofactor.

It carries out the reaction (2R)-2,3-dihydroxy-3-methylbutanoate = 3-methyl-2-oxobutanoate + H2O. The enzyme catalyses (2R,3R)-2,3-dihydroxy-3-methylpentanoate = (S)-3-methyl-2-oxopentanoate + H2O. It functions in the pathway amino-acid biosynthesis; L-isoleucine biosynthesis; L-isoleucine from 2-oxobutanoate: step 3/4. Its pathway is amino-acid biosynthesis; L-valine biosynthesis; L-valine from pyruvate: step 3/4. Functionally, functions in the biosynthesis of branched-chain amino acids. Catalyzes the dehydration of (2R,3R)-2,3-dihydroxy-3-methylpentanoate (2,3-dihydroxy-3-methylvalerate) into 2-oxo-3-methylpentanoate (2-oxo-3-methylvalerate) and of (2R)-2,3-dihydroxy-3-methylbutanoate (2,3-dihydroxyisovalerate) into 2-oxo-3-methylbutanoate (2-oxoisovalerate), the penultimate precursor to L-isoleucine and L-valine, respectively. The sequence is that of Dihydroxy-acid dehydratase from Prochlorococcus marinus (strain AS9601).